The primary structure comprises 558 residues: Scarecrow-like protein 6 (558 aa).

The disordered stretch occupies residues 19-90; sequence FSSSFPQPPS…GGDATTDEQC (72 aa). Low complexity predominate over residues 54–75; it reads SVLDSLISPTSSSTVSSSHGGN. The GRAS domain maps to 196-554; it reads KRLNPGPVGI…TELVGVSAWR (359 aa). Residues 203–257 form a leucine repeat I (LRI) region; the sequence is VGITEQLVKAAEVIESDTCLAQGILARLNQQLSSPVGKPLERAAFYFKEALNNLL. The VHIID stretch occupies residues 276-340; sequence YKSFSEISPV…DNAAPLSLKI (65 aa). A VHIID motif is present at residues 307–311; the sequence is LHIID. The tract at residues 356–388 is leucine repeat II (LRII); the sequence is FTQDNLKHFASEINISLDIQVLSLDLLGSISWP. The tract at residues 396 to 479 is PFYRE; it reads VAVNISAASF…RFLIQPEIEK (84 aa). Residues 482–554 are SAW; the sequence is LDRSRPIERP…TELVGVSAWR (73 aa).

It belongs to the GRAS family. Interacts with Meloidogyne incognita 16D10. As to expression, expressed in seedlings, roots, leaves, flowers and siliques.

It is found in the nucleus. Functionally, probable transcription factor involved in plant development. The chain is Scarecrow-like protein 6 (SCL6) from Arabidopsis thaliana (Mouse-ear cress).